Consider the following 171-residue polypeptide: Large ribosomal subunit protein uL10 (171 aa).

It belongs to the universal ribosomal protein uL10 family. Part of the ribosomal stalk of the 50S ribosomal subunit. The N-terminus interacts with L11 and the large rRNA to form the base of the stalk. The C-terminus forms an elongated spine to which L12 dimers bind in a sequential fashion forming a multimeric L10(L12)X complex.

In terms of biological role, forms part of the ribosomal stalk, playing a central role in the interaction of the ribosome with GTP-bound translation factors. In Paracoccus denitrificans (strain Pd 1222), this protein is Large ribosomal subunit protein uL10.